Consider the following 516-residue polypeptide: uncharacterized protein (516 aa).

The residue at position 21 (serine 21) is a Phosphoserine. The interval 46-74 is disordered; it reads DLQSSMEDSNKANGNGEETTDGAEGVLQT. Over residues 47–62 the composition is skewed to polar residues; it reads LQSSMEDSNKANGNGE. WD repeat units follow at residues 182–227, 252–292, 295–335, 337–377, 381–421, and 426–468; these read TFPL…AVYP, YHTD…CVKS, YHSD…APSS, QVTS…KSVW, AHDG…PKMV, and LDVG…GVRK. Over residues 482–493 the composition is skewed to basic and acidic residues; the sequence is ERIVQLEDRGAG. Residues 482 to 516 form a disordered region; the sequence is ERIVQLEDRGAGEDSSDDDDYEDIEDDDDQDAEMS. Positions 495–516 are enriched in acidic residues; sequence DSSDDDDYEDIEDDDDQDAEMS. Phosphoserine occurs at positions 496 and 497.

It localises to the cytoplasm. It is found in the nucleus. The protein resides in the nucleolus. This is an uncharacterized protein from Schizosaccharomyces pombe (strain 972 / ATCC 24843) (Fission yeast).